The sequence spans 307 residues: 2-haloacid dehalogenase, configuration-inverting (307 aa).

This sequence belongs to the HAD-like hydrolase superfamily. S-2-haloalkanoic acid dehalogenase family. As to quaternary structure, homodimer.

The catalysed reaction is an (S)-2-haloacid + H2O = a (2R)-2-hydroxycarboxylate + a halide anion + H(+). It catalyses the reaction an (R)-2-haloacid + H2O = a (2S)-2-hydroxycarboxylate + a halide anion + H(+). Its function is as follows. Dehalogenates both (S)- and (R)-2-haloalkanoic acids to the corresponding (R)- and (S)-hydroxyalkanoic acids, respectively, with inversion of configuration at C-2. Acts on 2-haloalkanoic acids whose carbon chain lengths are five or less. The sequence is that of 2-haloacid dehalogenase, configuration-inverting from Pseudomonas sp. (strain 113).